Consider the following 452-residue polypeptide: Biotin carboxylase (452 aa).

The Biotin carboxylation domain occupies 1–445 (MFKKVLIANR…TTAFVTNHLK (445 aa)). ATP-binding positions include K116, K158, 164–165 (GG), 200–203 (EKAV), H208, and H235. In terms of domain architecture, ATP-grasp spans 120–317 (RTAMQTAGVP…LVEWQLLIAA (198 aa)). Position 237 (K237) interacts with hydrogencarbonate. Positions 275 and 288 each coordinate ATP. Mg(2+) is bound by residues E275, E288, and N290. Residues E275, E288, and N290 each contribute to the Mn(2+) site. Residues R292, V295, and R338 each contribute to the hydrogencarbonate site. R292 is an active-site residue. Residue R338 participates in biotin binding.

As to quaternary structure, acetyl-CoA carboxylase is a heterohexamer of biotin carboxyl carrier protein, biotin carboxylase and the two subunits of carboxyl transferase in a 2:2 complex. The cofactor is Mg(2+). It depends on Mn(2+) as a cofactor.

It carries out the reaction N(6)-biotinyl-L-lysyl-[protein] + hydrogencarbonate + ATP = N(6)-carboxybiotinyl-L-lysyl-[protein] + ADP + phosphate + H(+). It participates in lipid metabolism; malonyl-CoA biosynthesis; malonyl-CoA from acetyl-CoA: step 1/1. This protein is a component of the acetyl coenzyme A carboxylase complex; first, biotin carboxylase catalyzes the carboxylation of the carrier protein and then the transcarboxylase transfers the carboxyl group to form malonyl-CoA. The chain is Biotin carboxylase (accC) from Halalkalibacterium halodurans (strain ATCC BAA-125 / DSM 18197 / FERM 7344 / JCM 9153 / C-125) (Bacillus halodurans).